Here is a 428-residue protein sequence, read N- to C-terminus: Phosphomethylpyrimidine synthase 2 (428 aa).

Substrate-binding positions include methionine 94, tyrosine 123, histidine 162, 184–186, 225–228, and glutamate 264; these read SRG and NGMR. Histidine 268 serves as a coordination point for Zn(2+). Residue tyrosine 291 coordinates substrate. Histidine 332 provides a ligand contact to Zn(2+). Positions 408, 411, and 415 each coordinate [4Fe-4S] cluster.

This sequence belongs to the ThiC family. The cofactor is [4Fe-4S] cluster.

The enzyme catalyses 5-amino-1-(5-phospho-beta-D-ribosyl)imidazole + S-adenosyl-L-methionine = 4-amino-2-methyl-5-(phosphooxymethyl)pyrimidine + CO + 5'-deoxyadenosine + formate + L-methionine + 3 H(+). It functions in the pathway cofactor biosynthesis; thiamine diphosphate biosynthesis. Its function is as follows. Catalyzes the synthesis of the hydroxymethylpyrimidine phosphate (HMP-P) moiety of thiamine from aminoimidazole ribotide (AIR) in a radical S-adenosyl-L-methionine (SAM)-dependent reaction. This is Phosphomethylpyrimidine synthase 2 from Methanosarcina mazei (strain ATCC BAA-159 / DSM 3647 / Goe1 / Go1 / JCM 11833 / OCM 88) (Methanosarcina frisia).